Reading from the N-terminus, the 467-residue chain is Sodium-dependent phosphate transport protein 1 (467 aa).

Asn-41, Asn-49, and Asn-58 each carry an N-linked (GlcNAc...) asparagine glycan. 10 consecutive transmembrane segments (helical) span residues Gly-81–Phe-101, Ser-119–Cys-139, Phe-178–Trp-198, Met-200–Phe-220, Ala-257–Ser-277, Gly-301–Leu-321, Leu-339–Ser-359, Ile-365–Ile-385, Cys-401–Leu-421, and Phe-433–Ala-453.

This sequence belongs to the major facilitator superfamily. Sodium/anion cotransporter family. Interacts with PDZK1. As to expression, expressed in kidney cortex, liver and brain but not in other tissues.

It localises to the apical cell membrane. It carries out the reaction 3 Na(+)(out) + phosphate(out) = 3 Na(+)(in) + phosphate(in). The catalysed reaction is urate(out) = urate(in). Important for the resorption of phosphate by the kidney. May be involved in actively transporting phosphate into cells via Na(+) cotransport in the renal brush border membrane. Plays a role in urate transport in the kidney. This Homo sapiens (Human) protein is Sodium-dependent phosphate transport protein 1 (SLC17A1).